A 370-amino-acid chain; its full sequence is Histidinol-phosphate aminotransferase (370 aa).

An N6-(pyridoxal phosphate)lysine modification is found at Lys223.

Belongs to the class-II pyridoxal-phosphate-dependent aminotransferase family. Histidinol-phosphate aminotransferase subfamily. In terms of assembly, homodimer. It depends on pyridoxal 5'-phosphate as a cofactor.

The enzyme catalyses L-histidinol phosphate + 2-oxoglutarate = 3-(imidazol-4-yl)-2-oxopropyl phosphate + L-glutamate. It functions in the pathway amino-acid biosynthesis; L-histidine biosynthesis; L-histidine from 5-phospho-alpha-D-ribose 1-diphosphate: step 7/9. This is Histidinol-phosphate aminotransferase from Methylobacterium nodulans (strain LMG 21967 / CNCM I-2342 / ORS 2060).